The following is a 188-amino-acid chain: Inosine triphosphate pyrophosphatase (188 aa).

Position 9–14 (9–14) interacts with ITP; sequence TGNAKK. Glu39 is a binding site for Mg(2+). ITP-binding positions include Lys51, 67 to 68, Lys84, 143 to 146, Lys166, and 171 to 172; these read DT, FGWD, and HR.

The protein belongs to the HAM1 NTPase family. Homodimer. Mg(2+) serves as cofactor. The cofactor is Mn(2+).

The protein resides in the cytoplasm. It carries out the reaction ITP + H2O = IMP + diphosphate + H(+). The catalysed reaction is dITP + H2O = dIMP + diphosphate + H(+). It catalyses the reaction XTP + H2O = XMP + diphosphate + H(+). In terms of biological role, pyrophosphatase that hydrolyzes non-canonical purine nucleotides such as inosine triphosphate (ITP), deoxyinosine triphosphate (dITP) or xanthosine 5'-triphosphate (XTP) to their respective monophosphate derivatives. The enzyme does not distinguish between the deoxy- and ribose forms. Probably excludes non-canonical purines from RNA and DNA precursor pools, thus preventing their incorporation into RNA and DNA and avoiding chromosomal lesions. This chain is Inosine triphosphate pyrophosphatase, found in Aedes aegypti (Yellowfever mosquito).